Here is a 278-residue protein sequence, read N- to C-terminus: Acyl-[acyl-carrier-protein]--UDP-N-acetylglucosamine O-acyltransferase (278 aa).

This sequence belongs to the transferase hexapeptide repeat family. LpxA subfamily. As to quaternary structure, homotrimer.

The protein localises to the cytoplasm. The enzyme catalyses a (3R)-hydroxyacyl-[ACP] + UDP-N-acetyl-alpha-D-glucosamine = a UDP-3-O-[(3R)-3-hydroxyacyl]-N-acetyl-alpha-D-glucosamine + holo-[ACP]. The protein operates within glycolipid biosynthesis; lipid IV(A) biosynthesis; lipid IV(A) from (3R)-3-hydroxytetradecanoyl-[acyl-carrier-protein] and UDP-N-acetyl-alpha-D-glucosamine: step 1/6. In terms of biological role, involved in the biosynthesis of lipid A, a phosphorylated glycolipid that anchors the lipopolysaccharide to the outer membrane of the cell. The polypeptide is Acyl-[acyl-carrier-protein]--UDP-N-acetylglucosamine O-acyltransferase (Brucella anthropi (strain ATCC 49188 / DSM 6882 / CCUG 24695 / JCM 21032 / LMG 3331 / NBRC 15819 / NCTC 12168 / Alc 37) (Ochrobactrum anthropi)).